The chain runs to 337 residues: MTLQIGVIGCGAIGQDHIRRLTRKLSGARVVAVNDIDPQQARDAVTKYGLDAEIYGDGHEVVAAADVQAVLVTSWGPTHEAFVLDAIAHGKPVFCEKPLAVTAQGCMRIVEAEVAHGRRLVQVGFMRPYDEGYRALKHVIDSGGIGAPLMLHCAHRNQSVGERYTTDMAITDTLIHELDVLRWLLGEDYTSAQVVYPKKTRHASAHLADPQIVLLETASGVRIDVEIFVNCQYGYDIQCEVVGENGIAKLPDPPAVGLKHAARQSVEIMTDWKERFIASYDVELQAFIDGVRQGALTGPSAWDGYAAAVAADACVRAQQSGAVEPIAMAERPAFYRG.

The protein belongs to the Gfo/Idh/MocA family. In terms of assembly, homotetramer.

It carries out the reaction myo-inositol + NAD(+) = scyllo-inosose + NADH + H(+). Functionally, involved in the oxidation of myo-inositol (MI) to 2-keto-myo-inositol (2KMI or 2-inosose). The chain is Inositol 2-dehydrogenase from Burkholderia ambifaria (strain MC40-6).